Here is a 260-residue protein sequence, read N- to C-terminus: ATP synthase subunit a (260 aa).

Transmembrane regions (helical) follow at residues 30–50 (IAFT…IVFV), 96–116 (LFAF…LVGV), 125–145 (FTVT…VGFA), 151–171 (FFSL…IFPI), 187–207 (LFVA…FVIS), 213–233 (VGTF…ICAL), and 234–254 (ELLV…VYLN).

The protein belongs to the ATPase A chain family. In terms of assembly, F-type ATPases have 2 components, CF(1) - the catalytic core - and CF(0) - the membrane proton channel. CF(1) has five subunits: alpha(3), beta(3), gamma(1), delta(1), epsilon(1). CF(0) has three main subunits: a(1), b(2) and c(9-12). The alpha and beta chains form an alternating ring which encloses part of the gamma chain. CF(1) is attached to CF(0) by a central stalk formed by the gamma and epsilon chains, while a peripheral stalk is formed by the delta and b chains.

The protein resides in the cell inner membrane. Its function is as follows. Key component of the proton channel; it plays a direct role in the translocation of protons across the membrane. This Novosphingobium aromaticivorans (strain ATCC 700278 / DSM 12444 / CCUG 56034 / CIP 105152 / NBRC 16084 / F199) protein is ATP synthase subunit a.